The chain runs to 503 residues: Lanosterol 14-alpha demethylase (503 aa).

A helical transmembrane segment spans residues 24–44 (GNLLSTLLIACAFTLSLVYLF). A heme-binding site is contributed by Cys449.

The protein belongs to the cytochrome P450 family. The cofactor is heme. Post-translationally, ubiquitinated by MARCHF6, leading to proteasomal degradation.

The protein localises to the endoplasmic reticulum membrane. Its subcellular location is the microsome membrane. The enzyme catalyses a 14alpha-methyl steroid + 3 reduced [NADPH--hemoprotein reductase] + 3 O2 = a Delta(14) steroid + formate + 3 oxidized [NADPH--hemoprotein reductase] + 4 H2O + 4 H(+). It carries out the reaction lanosterol + 3 reduced [NADPH--hemoprotein reductase] + 3 O2 = 4,4-dimethyl-5alpha-cholesta-8,14,24-trien-3beta-ol + formate + 3 oxidized [NADPH--hemoprotein reductase] + 4 H2O + 4 H(+). It catalyses the reaction 24,25-dihydrolanosterol + 3 reduced [NADPH--hemoprotein reductase] + 3 O2 = 4,4-dimethyl-8,14-cholestadien-3beta-ol + formate + 3 oxidized [NADPH--hemoprotein reductase] + 4 H2O + 4 H(+). The catalysed reaction is a 14alpha-methyl steroid + reduced [NADPH--hemoprotein reductase] + O2 = a 14alpha-hydroxymethyl steroid + oxidized [NADPH--hemoprotein reductase] + H2O + H(+). The enzyme catalyses a 14alpha-hydroxymethyl steroid + reduced [NADPH--hemoprotein reductase] + O2 = a 14alpha-formyl steroid + oxidized [NADPH--hemoprotein reductase] + 2 H2O + H(+). It carries out the reaction a 14alpha-formyl steroid + reduced [NADPH--hemoprotein reductase] + O2 = a Delta(14) steroid + formate + oxidized [NADPH--hemoprotein reductase] + H2O + 2 H(+). It catalyses the reaction lanosterol + reduced [NADPH--hemoprotein reductase] + O2 = 32-hydroxylanosterol + oxidized [NADPH--hemoprotein reductase] + H2O + H(+). The catalysed reaction is 32-hydroxylanosterol + reduced [NADPH--hemoprotein reductase] + O2 = 32-oxolanosterol + oxidized [NADPH--hemoprotein reductase] + 2 H2O + H(+). The enzyme catalyses 32-oxolanosterol + reduced [NADPH--hemoprotein reductase] + O2 = 4,4-dimethyl-5alpha-cholesta-8,14,24-trien-3beta-ol + formate + oxidized [NADPH--hemoprotein reductase] + H2O + 2 H(+). It carries out the reaction 24,25-dihydrolanosterol + reduced [NADPH--hemoprotein reductase] + O2 = 32-hydroxy-24,25-dihydrolanosterol + oxidized [NADPH--hemoprotein reductase] + H2O + H(+). It catalyses the reaction 32-hydroxy-24,25-dihydrolanosterol + reduced [NADPH--hemoprotein reductase] + O2 = 32-oxo-24,25-dihydrolanosterol + oxidized [NADPH--hemoprotein reductase] + 2 H2O + H(+). The catalysed reaction is 32-oxo-24,25-dihydrolanosterol + reduced [NADPH--hemoprotein reductase] + O2 = 4,4-dimethyl-8,14-cholestadien-3beta-ol + formate + oxidized [NADPH--hemoprotein reductase] + H2O + 2 H(+). It participates in steroid biosynthesis; zymosterol biosynthesis; zymosterol from lanosterol: step 1/6. Inhibited by azalanstat. Inhibited by azole antifungal agents ketoconazole, itraconazole and fluconazole. Sterol 14alpha-demethylase that plays a critical role in the cholesterol biosynthesis pathway, being cholesterol the major sterol component in mammalian membranes as well as a precursor for bile acid and steroid hormone synthesis. Cytochrome P450 monooxygenase that catalyzes the three-step oxidative removal of the 14alpha-methyl group (C-32) of sterols such as lanosterol (lanosta-8,24-dien-3beta-ol) and 24,25-dihydrolanosterol (DHL) in the form of formate, and converts the sterols to 4,4-dimethyl-5alpha-cholesta-8,14,24-trien-3beta-ol and 4,4-dimethyl-8,14-cholestadien-3beta-ol, respectively, which are intermediates of cholesterol biosynthesis. Can also demethylate substrates not intrinsic to mammals, such as eburicol (24-methylene-24,25-dihydrolanosterol), but at a lower rate than DHL. The polypeptide is Lanosterol 14-alpha demethylase (Rattus norvegicus (Rat)).